The chain runs to 237 residues: DCN1-like protein 5 (237 aa).

Phosphoserine is present on residues Ser9, Ser41, and Ser48. The 187-residue stretch at 46 to 232 (FSSKKCLAWF…LLDEFVEWQK (187 aa)) folds into the DCUN1 domain.

As to quaternary structure, part of a complex that contains DCUN1D5, CUL1 and RBX1; this interaction is bridged by CUL1. Interacts (via the DCUN1 domain) with the unneddylated cullins: interacts with CUL1, CUL2, CUL3, CUL4A, CUL4B and CUL5; these interactions promote the cullin neddylation and the identity of the cullin dictates the affinity of the interaction. Interacts (via DCUN1 domain) with UBE2M (N-terminally acetylated form) and probably with UBE2F (N-terminally acetylated form). May also interact with regulators or subunits of cullin-RING ligases such as RBX1, RNF7, ELOB and DDB1; these interactions are bridged by cullins. Interacts with CAND1; this interaction is bridged by cullins and strongly inhibits the neddylation of cullins. These CAND-cullin-DCNL complexes can only be neddylated in the presence of a substrate adapter. Post-translationally, phosphorylation at Ser-41 is independent of cullin's interaction. Phosphorylated in response to both TICAM1 and MYD88 dependent Toll-like receptor (TLR) pathway activation. Phosphorylated in response to IL1B stimulation. Weakly expressed in testis, skin and immune tissues (thymus, spleen and lymph nodes).

It is found in the nucleus. The protein resides in the cytoplasm. It localises to the cytoskeleton. Its subcellular location is the spindle. Contributes to the neddylation of all cullins by transferring NEDD8 from N-terminally acetylated NEDD8-conjugating E2s enzyme to different cullin C-terminal domain-RBX complexes which is necessary for the activation of cullin-RING E3 ubiquitin ligases (CRLs). May play a role in DNA damage response and may participate in cell proliferation and anchorage-independent cell growth. This is DCN1-like protein 5 from Homo sapiens (Human).